The primary structure comprises 138 residues: MDATQPQYELSVVTQCLKSAIDVIQWLIPTITKFSQSHPLVFQLLFIFFTFYVFYKLLMNFITLVKRFLYLTLVVTCIGIYMRGSQQFLTVDLLNFYNFVMSNRYYAFKIYTLFINALEREINTVYHLAQMKMEQLLK.

Topologically, residues 1–39 (MDATQPQYELSVVTQCLKSAIDVIQWLIPTITKFSQSHP) are cytoplasmic. The chain crosses the membrane as a helical span at residues 40 to 58 (LVFQLLFIFFTFYVFYKLL). The Perinuclear space segment spans residues 59–67 (MNFITLVKR). A helical membrane pass occupies residues 68 to 84 (FLYLTLVVTCIGIYMRG). The Cytoplasmic portion of the chain corresponds to 85–138 (SQQFLTVDLLNFYNFVMSNRYYAFKIYTLFINALEREINTVYHLAQMKMEQLLK).

Belongs to the APQ12 family.

The protein resides in the nucleus membrane. It localises to the endoplasmic reticulum membrane. Its function is as follows. Involved in the regulation of lipid homeostasis in the endoplasmic reticulum, thereby impacting nuclear pore complex biogenesis and localization, and nucleocytoplasmic mRNA transport. In Saccharomyces cerevisiae (strain ATCC 204508 / S288c) (Baker's yeast), this protein is Nuclear membrane organization protein APQ12 (APQ12).